The sequence spans 448 residues: Portal protein (448 aa).

The disordered stretch occupies residues methionine 1–lysine 25.

This sequence belongs to the P23virus portal protein family. Homododecamer. Interacts with the capsid protein. Interacts with the terminase large subunit; this interaction allows the packaging of viral DNA.

The protein resides in the virion. Forms the portal vertex of the capsid. This portal plays critical roles in head assembly, genome packaging, neck/tail attachment, and genome ejection. The portal protein multimerizes as a single ring-shaped homododecamer arranged around a central channel. Forms the portal vertex of the capsid. This portal plays critical roles in head assembly, genome packaging, neck/tail attachment, and genome ejection. This chain is Portal protein, found in Thermus thermophilus (Thermus thermophilus phage P23-45).